Consider the following 422-residue polypeptide: Zinc finger protein zfp-2 (422 aa).

The disordered stretch occupies residues 95–119; the sequence is AIPCTSSSMQPSTSSNPSSGEHQPV. Low complexity predominate over residues 99–113; it reads TSSSMQPSTSSNPSS. 7 consecutive C2H2-type zinc fingers follow at residues 171-194, 200-222, 229-251, 255-278, 300-322, 328-350, and 356-379; these read YRCTNCKTYFGNKEVYQRHIQEVH, FRCFNCGMRFANKTSMTHHLKDH, FSCDYCPRIFSKLESKTRHHKMH, STCQTCMRFFTTEDALRHHQSTAH, YSCSYCNLRFHFKKDMLVHERIH, YSCGYCMKSFAQSQALTAHIRTH, and YGCGKCDKRFRDNSCLRKHELAAH.

As to expression, expressed in vulval cells and all somatic gonad structures such as spermatheca, sheath cells, uterine cells and distal tip cells.

It is found in the nucleus. Probable zinc finger transcription factor that acts as a transcriptional repressor. Acts redundantly with the transcriptional repressor lin-35 to control the development of somatic gonad lineages. May, in addition, suppress sensitivity to RNAi. This chain is Zinc finger protein zfp-2, found in Caenorhabditis elegans.